Consider the following 301-residue polypeptide: Homoserine O-acetyltransferase (301 aa).

C142 (acyl-thioester intermediate) is an active-site residue. 2 residues coordinate substrate: K163 and S192. H235 (proton acceptor) is an active-site residue. Residue E237 is part of the active site. Position 249 (R249) interacts with substrate.

It belongs to the MetA family.

It localises to the cytoplasm. It catalyses the reaction L-homoserine + acetyl-CoA = O-acetyl-L-homoserine + CoA. It participates in amino-acid biosynthesis; L-methionine biosynthesis via de novo pathway; O-acetyl-L-homoserine from L-homoserine: step 1/1. Transfers an acetyl group from acetyl-CoA to L-homoserine, forming acetyl-L-homoserine. The protein is Homoserine O-acetyltransferase of Bacillus thuringiensis subsp. konkukian (strain 97-27).